Consider the following 474-residue polypeptide: Glutathione synthetase (474 aa).

Residue Ala-2 is modified to N-acetylalanine. Substrate is bound at residue Arg-125. Glu-144 is an ATP binding site. Residues Glu-144 and Asn-146 each contribute to the Mg(2+) site. Residues 148 to 151, 214 to 216, Gln-220, and 267 to 270 contribute to the substrate site; these read ISAS, ERN, and RDGY. Residues Lys-305, 364–373, Tyr-375, and 398–401 contribute to the ATP site; these read KPQREGGGNN and MEKI. Glu-368 serves as a coordination point for Mg(2+). A Phosphoserine modification is found at Ser-415. An ATP-binding site is contributed by Glu-425. Arg-450 contributes to the substrate binding site. Positions 452 and 458 each coordinate ATP. 461-462 is a binding site for substrate; it reads VA.

It belongs to the eukaryotic GSH synthase family. In terms of assembly, homodimer. It depends on Mg(2+) as a cofactor.

It catalyses the reaction gamma-L-glutamyl-L-cysteine + glycine + ATP = glutathione + ADP + phosphate + H(+). It carries out the reaction gamma-L-glutamyl-(2S)-2-aminobutanoate + glycine + ATP = ophthalmate + ADP + phosphate + H(+). The protein operates within sulfur metabolism; glutathione biosynthesis; glutathione from L-cysteine and L-glutamate: step 2/2. Functionally, catalyzes the production of glutathione from gamma-glutamylcysteine and glycine in an ATP-dependent manner. Glutathione (gamma-glutamylcysteinylglycine, GSH) is the most abundant intracellular thiol in living aerobic cells and is required for numerous processes including the protection of cells against oxidative damage, amino acid transport, the detoxification of foreign compounds, the maintenance of protein sulfhydryl groups in a reduced state and acts as a cofactor for a number of enzymes. Participates in ophthalmate biosynthesis in hepatocytes. This chain is Glutathione synthetase, found in Rattus norvegicus (Rat).